The sequence spans 62 residues: Small ribosomal subunit protein bS21 (62 aa).

Residues 43–62 (EKRKRKAMALQKQRKRRSRY) are disordered. The segment covering 44 to 62 (KRKRKAMALQKQRKRRSRY) has biased composition (basic residues).

The protein belongs to the bacterial ribosomal protein bS21 family.

The sequence is that of Small ribosomal subunit protein bS21 from Trichodesmium erythraeum (strain IMS101).